Consider the following 389-residue polypeptide: Sulfate adenylyltransferase (389 aa).

It belongs to the sulfate adenylyltransferase family.

The enzyme catalyses sulfate + ATP + H(+) = adenosine 5'-phosphosulfate + diphosphate. The protein operates within sulfur metabolism; hydrogen sulfide biosynthesis; sulfite from sulfate: step 1/3. The chain is Sulfate adenylyltransferase from Microcystis aeruginosa (strain NIES-843 / IAM M-2473).